The chain runs to 206 residues: Ion-translocating oxidoreductase complex subunit G (206 aa).

A helical transmembrane segment spans residues 9 to 29 (GITLALFAAGSTGLTAAINQM). FMN phosphoryl threonine is present on T174.

The protein belongs to the RnfG family. The complex is composed of six subunits: RsxA, RsxB, RsxC, RsxD, RsxE and RsxG. It depends on FMN as a cofactor.

The protein localises to the cell inner membrane. In terms of biological role, part of a membrane-bound complex that couples electron transfer with translocation of ions across the membrane. Required to maintain the reduced state of SoxR. This is Ion-translocating oxidoreductase complex subunit G from Escherichia coli O157:H7.